Consider the following 100-residue polypeptide: MGALKPWHIAVLVVVLILLFGAKRLPDAARSLGRSLRIIKAETKSLHDDDRDLAEKANAQAGYQPLPPQVQQEPYPQQTPYQAPPQQQPVVDPVQRARDS.

A helical transmembrane segment spans residues 1 to 21 (MGALKPWHIAVLVVVLILLFG). The segment covering 44–55 (KSLHDDDRDLAE) has biased composition (basic and acidic residues). Positions 44 to 100 (KSLHDDDRDLAEKANAQAGYQPLPPQVQQEPYPQQTPYQAPPQQQPVVDPVQRARDS) are disordered. Residues 69 to 81 (QVQQEPYPQQTPY) are compositionally biased toward low complexity.

The protein belongs to the TatA/E family. As to quaternary structure, the Tat system comprises two distinct complexes: a TatABC complex, containing multiple copies of TatA, TatB and TatC subunits, and a separate TatA complex, containing only TatA subunits. Substrates initially bind to the TatABC complex, which probably triggers association of the separate TatA complex to form the active translocon.

The protein resides in the cell membrane. Part of the twin-arginine translocation (Tat) system that transports large folded proteins containing a characteristic twin-arginine motif in their signal peptide across membranes. TatA could form the protein-conducting channel of the Tat system. This is Sec-independent protein translocase protein TatA from Salinispora arenicola (strain CNS-205).